The primary structure comprises 290 residues: MLGQRAGDGERPGLPGDGEGGVPARPGRRAERPPQRPAKVNKAVTCAAHLPGAAASRPLSPNKPDRVRPGQRDRIGAKRQRRRRADAGQARAASSRRVVPTAPEVLGAVASLPDRGRPTVARVATGSRLEGLFSAASLKLSALTQSLTRVRQAPTASGATIRLPASPVEMFLTSAFLTGFSFHCLYSGIGHGEDILASVEQITIVSRPLSGQRGAGPGNSAYTPRRSQGGPRAATTPGFRFPCRGLVRRAVLRLTVTVQDCILTALLAVSFHSIGVVIMTSSYLLGPVVK.

Disordered regions lie at residues 1–98 (MLGQ…SRRV) and 209–236 (LSGQ…AATT). Positions 63-76 (KPDRVRPGQRDRIG) are enriched in basic and acidic residues. A compositionally biased stretch (low complexity) spans 87–97 (AGQARAASSRR). Residues 261 to 281 (CILTALLAVSFHSIGVVIMTS) form a helical membrane-spanning segment.

The protein localises to the membrane. This is an uncharacterized protein from Homo sapiens (Human).